Reading from the N-terminus, the 526-residue chain is Phosphoenolpyruvate carboxykinase (ATP) (526 aa).

Substrate contacts are provided by Arg-55, Tyr-190, and Lys-196. ATP-binding positions include Lys-196, His-215, and 231–239 (GLSGTGKTT). Residues Lys-196 and His-215 each contribute to the Mn(2+) site. Asp-252 provides a ligand contact to Mn(2+). ATP is bound by residues Glu-280, Arg-317, and Thr-442. Substrate is bound at residue Arg-317.

The protein belongs to the phosphoenolpyruvate carboxykinase (ATP) family. Mn(2+) is required as a cofactor.

The protein resides in the cytoplasm. The catalysed reaction is oxaloacetate + ATP = phosphoenolpyruvate + ADP + CO2. The protein operates within carbohydrate biosynthesis; gluconeogenesis. Its function is as follows. Involved in the gluconeogenesis. Catalyzes the conversion of oxaloacetate (OAA) to phosphoenolpyruvate (PEP) through direct phosphoryl transfer between the nucleoside triphosphate and OAA. The polypeptide is Phosphoenolpyruvate carboxykinase (ATP) (Alkaliphilus oremlandii (strain OhILAs) (Clostridium oremlandii (strain OhILAs))).